We begin with the raw amino-acid sequence, 76 residues long: Exodeoxyribonuclease 7 small subunit (76 aa).

This sequence belongs to the XseB family. Heterooligomer composed of large and small subunits.

It is found in the cytoplasm. It carries out the reaction Exonucleolytic cleavage in either 5'- to 3'- or 3'- to 5'-direction to yield nucleoside 5'-phosphates.. Functionally, bidirectionally degrades single-stranded DNA into large acid-insoluble oligonucleotides, which are then degraded further into small acid-soluble oligonucleotides. This chain is Exodeoxyribonuclease 7 small subunit, found in Geobacter sulfurreducens (strain ATCC 51573 / DSM 12127 / PCA).